The following is a 755-amino-acid chain: Polyribonucleotide nucleotidyltransferase (755 aa).

2 residues coordinate Mg(2+): Asp-493 and Asp-499. The KH domain maps to Pro-560–Ile-619. The S1 motif domain occupies Gly-629 to Arg-698. Positions Ala-699–Asp-755 are disordered. Basic and acidic residues predominate over residues Arg-719–Asp-755.

This sequence belongs to the polyribonucleotide nucleotidyltransferase family. The cofactor is Mg(2+).

The protein localises to the cytoplasm. The enzyme catalyses RNA(n+1) + phosphate = RNA(n) + a ribonucleoside 5'-diphosphate. In terms of biological role, involved in mRNA degradation. Catalyzes the phosphorolysis of single-stranded polyribonucleotides processively in the 3'- to 5'-direction. This chain is Polyribonucleotide nucleotidyltransferase, found in Chloroflexus aurantiacus (strain ATCC 29366 / DSM 635 / J-10-fl).